A 445-amino-acid polypeptide reads, in one-letter code: Phosphoglucosamine mutase (445 aa).

Ser102 (phosphoserine intermediate) is an active-site residue. Residues Ser102, Asp241, Asp243, and Asp245 each contribute to the Mg(2+) site. Phosphoserine is present on Ser102.

Belongs to the phosphohexose mutase family. It depends on Mg(2+) as a cofactor. Post-translationally, activated by phosphorylation.

It carries out the reaction alpha-D-glucosamine 1-phosphate = D-glucosamine 6-phosphate. Functionally, catalyzes the conversion of glucosamine-6-phosphate to glucosamine-1-phosphate. This is Phosphoglucosamine mutase from Escherichia coli O81 (strain ED1a).